Consider the following 229-residue polypeptide: Flagellar calcium-binding protein TB-1.7G (229 aa).

Positions 1-25 (GSKNASNPKDGAASKGGKDGKTTAD) are disordered. A compositionally biased stretch (basic and acidic residues) spans 16-25 (GGKDGKTTAD). 4 consecutive EF-hand domains span residues 44 to 79 (ESKSRRIELFKQFDTNGTGKLGFREVLDGCYGILKL), 80 to 115 (DEFTTHLPDIVQRAFDKAKDLGNKVKGVGEEDLVEF), 126 to 161 (YDIFELTVMFDTMDKDGSLLLELQEFKEALPKLKEW), and 163 to 198 (VDITDATTVFNEIDTNGSGVVTFDEFSCWAVTKKLQ). D57, N59, T61, K63, and E68 together coordinate Ca(2+). Ca(2+)-binding residues include D139, D141, S143, E150, D176, N178, S180, and E187. The tract at residues 202-229 (DPDDEENGANEGDGANAGDGVPAAEGSA) is disordered. Residues 210–221 (ANEGDGANAGDG) are compositionally biased toward low complexity.

The protein belongs to the calflagin family.

The protein resides in the cell projection. It localises to the cilium. The protein localises to the flagellum. Its function is as follows. May contribute to the rapid motility of the trypanosomes, playing a role either in flagellar structure or in calcium metabolism. Could alternate between a GDP-bound inactive form to a calcium/GTP-bound active form. This is Flagellar calcium-binding protein TB-1.7G from Trypanosoma brucei brucei.